The sequence spans 254 residues: PSME3-interacting protein (254 aa).

The residue at position 1 (Met-1) is an N-acetylmethionine. Ser-17 is subject to Phosphoserine. A compositionally biased stretch (basic and acidic residues) spans 22-39; that stretch reads DERRKRRQEEWEKVRKPE. The disordered stretch occupies residues 22 to 52; the sequence is DERRKRRQEEWEKVRKPEDPEECPEEVYDPR. Lys-139 carries the post-translational modification N6-acetyllysine. Residues 155 to 195 are disordered; sequence GAVKHKSSESGNSVKRLKPDPEPDDKNQEPSSCKSLGNTSL. Residues 171–182 show a composition bias toward basic and acidic residues; it reads LKPDPEPDDKNQ. Residues 183–195 are compositionally biased toward polar residues; sequence EPSSCKSLGNTSL. Residues 201-254 form an interaction with PSME3 region; that stretch reads HCPSAAVCIGILPGLGAYSGSSDSESSSDSEGTINATGKIVSSIFRTNTFLEAP. Ser-222 and Ser-228 each carry phosphoserine; by CK2.

In terms of assembly, interacts (via C-terminus) with both free and 20S proteasome-bound forms of the proteasome activator complex subunit PSME3; the interaction is direct. Phosphorylation by CK2 stabilizes the interaction with PSME3.

Its subcellular location is the nucleus. In terms of biological role, promotes the association of the proteasome activator complex subunit PSME3 with the 20S proteasome and regulates its activity. Inhibits PSME3-mediated degradation of some proteasome substrates, probably by affecting their diffusion rate into the catalytic chamber of the proteasome. Also inhibits the interaction of PSME3 with COIL, inhibits accumulation of PSME3 in Cajal bodies and positively regulates the number of Cajal bodies in the nucleus. The polypeptide is PSME3-interacting protein (Homo sapiens (Human)).